The sequence spans 512 residues: Putative UDP-glucuronosyltransferase ugt-55 (512 aa).

The N-terminal stretch at 1–22 is a signal peptide; that stretch reads MQLLTLPTLIFIFLNYGTPCLS. A helical membrane pass occupies residues 487-507; it reads ILLYLDSIAMFTLTLLTMILI.

Belongs to the UDP-glycosyltransferase family.

It is found in the membrane. The enzyme catalyses glucuronate acceptor + UDP-alpha-D-glucuronate = acceptor beta-D-glucuronoside + UDP + H(+). This chain is Putative UDP-glucuronosyltransferase ugt-55 (ugt-55), found in Caenorhabditis elegans.